The primary structure comprises 650 residues: MGVLLREALRSMCVNNQWSYAVFWKIGCQNSSLLIWEECYNETESSSNPRRLCGLGVDTQGNEKVQLLTNRMMLNNRIILVGEGLVGRAAFTGHHQWILANSFNRDVHPPEVINEMLLQFSAGIQTVAVFPVVPHGVVQLGSSLPIMENLGFVNDVKGLILQLGCVPGALLSENYRTYEPAADFIGVPVSRIIPSQGHKILQSSAFVAETSKQHFNSTGSSDHQMVEESPCNLVDEHEGGWQSTTGFLTAGEVAVPSNPDAWLNQNFSCMSNVDAAEQQQIPCEDISSKRSLGSDDLFDMLGLDDKNKGCDNSWGVSQMRTEVLTRELSDFRIIQEMDPEFGSSGYELSGTDHLLDAVVSGACSSTKQISDETSESCKTTLTKVSNSSVTTPSHSSPQGSQLFEKKHGQPLGPSSVYGSQISSWVEQAHSLKREGSPRMVNKNETAKPANNRKRLKPGENPRPRPKDRQMIQDRVKELREIIPNGAKCSIDALLERTIKHMLFLQNVSKHSDKLKQTGESKIMKEDGGGATWAFEVGSKSMVCPIVVEDINPPRIFQVEMLCEQRGFFLEIADWIRSLGLTILKGVIETRVDKIWARFTVEASRDVTRMEIFMQLVNILEQTMKCGGNSKTILDGIKATMPLPVTGGCSM.

Disordered stretches follow at residues L381–Y417 and L431–M470. The segment covering V384–P397 has biased composition (low complexity). Positions N451–G458 match the Nuclear localization signal motif. The 50-residue stretch at L455–L504 folds into the bHLH domain. The segment covering K456–M470 has biased composition (basic and acidic residues).

This sequence belongs to the bHLH protein family. LHW subfamily. In terms of assembly, homodimer. Can also interact with bHLH proteins. In terms of tissue distribution, expressed in both root and shoot meristems. Present in root tips.

The protein resides in the nucleus. Transcription activator that regulates root development; promotes the production of stele cells in roots. Coordinately controls the number of all vascular cell types by regulating the size of the pool of cells from which they arise. This chain is Transcription factor LHW (LHW), found in Arabidopsis thaliana (Mouse-ear cress).